The following is a 208-amino-acid chain: Small ribosomal subunit protein uS5 (208 aa).

Over residues 1–15 (MTDSNNQSPNKKTSG) the composition is skewed to polar residues. A disordered region spans residues 1–54 (MTDSNNQSPNKKTSGSSSAPPAADGRQENRRSRGEKRGGRRDRRGQERDSEWQE). Basic and acidic residues-rich tracts occupy residues 25 to 37 (GRQENRRSRGEKR) and 44 to 54 (RGQERDSEWQE). Positions 52 to 115 (WQERVVQIRR…ADGKKHLVRV (64 aa)) constitute an S5 DRBM domain.

Belongs to the universal ribosomal protein uS5 family. In terms of assembly, part of the 30S ribosomal subunit. Contacts proteins S4 and S8.

Functionally, with S4 and S12 plays an important role in translational accuracy. Located at the back of the 30S subunit body where it stabilizes the conformation of the head with respect to the body. This chain is Small ribosomal subunit protein uS5, found in Prochlorococcus marinus (strain NATL2A).